The primary structure comprises 118 residues: Probable dihydroneopterin aldolase (118 aa).

Residues glutamate 21, tyrosine 53, and 72–73 (IE) each bind substrate. Lysine 98 serves as the catalytic Proton donor/acceptor.

It belongs to the DHNA family.

The catalysed reaction is 7,8-dihydroneopterin = 6-hydroxymethyl-7,8-dihydropterin + glycolaldehyde. It functions in the pathway cofactor biosynthesis; tetrahydrofolate biosynthesis; 2-amino-4-hydroxy-6-hydroxymethyl-7,8-dihydropteridine diphosphate from 7,8-dihydroneopterin triphosphate: step 3/4. In terms of biological role, catalyzes the conversion of 7,8-dihydroneopterin to 6-hydroxymethyl-7,8-dihydropterin. In Synechocystis sp. (strain ATCC 27184 / PCC 6803 / Kazusa), this protein is Probable dihydroneopterin aldolase (folB).